We begin with the raw amino-acid sequence, 488 residues long: E3 ubiquitin-protein ligase XIAP (488 aa).

3 BIR repeats span residues 40-105 (RLAS…KFIN), 176-241 (RLQT…YFVL), and 266-329 (RLET…QFLI). The Zn(2+) site is built by Cys-298, Cys-301, His-318, and Cys-325. An RING-type zinc finger spans residues 441 to 476 (CKVCMDRRITIVFIPCGHLVACAVCADVLDKCPICC).

Belongs to the IAP family. Monomer, and homodimer. In terms of processing, degraded in a 2-step mechanism; a caspase-independent first step and a caspase-dependent second step. Stabilized indirectly by MAPK, which acts to delay caspase activation, rather than directly phosphorylating xiap.

The protein resides in the cytoplasm. Its subcellular location is the nucleus. The catalysed reaction is S-ubiquitinyl-[E2 ubiquitin-conjugating enzyme]-L-cysteine + [acceptor protein]-L-lysine = [E2 ubiquitin-conjugating enzyme]-L-cysteine + N(6)-ubiquitinyl-[acceptor protein]-L-lysine.. Multi-functional protein which regulates not only caspases and apoptosis, but also acts as an E3 ubiquitin-protein ligase mediating ubiquitination and subsequent proteasomal degradation of its target proteins. Acts as a direct caspase inhibitor. E3 ubiquitin-protein ligase that acts as an important regulator of innate immunity by mediating 'Lys-63'-linked polyubiquitination of ripk2 downstream of NOD1 and NOD2, thereby transforming ripk2 into a scaffolding protein for downstream effectors, ultimately leading to activation of the NF-kappa-B and MAP kinases signaling. A key apoptotic suppressor in eggs. Acts as a positive regulator of Wnt signaling. This Xenopus laevis (African clawed frog) protein is E3 ubiquitin-protein ligase XIAP (xiap).